The sequence spans 290 residues: BEL1-like homeodomain protein 11 (290 aa).

Positions 20-36 are SR/KY domain; the sequence is SRYAKAVQCLVEEVIDI. A BELL domain region spans residues 81–152; that stretch reads ENHEIHIKIT…SLEEAIISQL (72 aa). A DNA-binding region (homeobox) is located at residues 202–264; it reads AWKPIRGLPE…NARVRLWKPM (63 aa).

The protein belongs to the TALE/BELL homeobox family. As to quaternary structure, may form heterodimeric complexes with TALE/KNOX proteins.

It localises to the nucleus. This is BEL1-like homeodomain protein 11 (BLH11) from Arabidopsis thaliana (Mouse-ear cress).